The sequence spans 61 residues: Protein translocase subunit SecE (61 aa).

The chain crosses the membrane as a helical span at residues 38 to 58 (GIGMILIGLIGLVIRMIGYLI).

Belongs to the SecE/SEC61-gamma family. Component of the Sec protein translocase complex. Heterotrimer consisting of SecY (alpha), SecG (beta) and SecE (gamma) subunits. The heterotrimers can form oligomers, although 1 heterotrimer is thought to be able to translocate proteins. Interacts with the ribosome. May interact with SecDF, and other proteins may be involved.

It is found in the cell membrane. Functionally, essential subunit of the Sec protein translocation channel SecYEG. Clamps together the 2 halves of SecY. May contact the channel plug during translocation. The protein is Protein translocase subunit SecE of Thermococcus onnurineus (strain NA1).